The sequence spans 533 residues: Putative phosphate permease HP_1491 (533 aa).

12 helical membrane-spanning segments follow: residues 23-43 (IALA…FGQA), 47-67 (GLLL…IGAN), 81-101 (AISM…GAII), 129-149 (VMLA…LIGA), 156-176 (SVVG…AVNW), 182-202 (IVAS…FFLM), 221-241 (VVPY…IVKV), 248-268 (LNFE…FILF), 286-306 (INEL…FAHG), 338-358 (VPLW…SLYG), 372-392 (LDKM…LLAS), and 509-529 (LVTV…LGFI).

Belongs to the inorganic phosphate transporter (PiT) (TC 2.A.20) family.

The protein resides in the cell membrane. Potential transporter for phosphate. The chain is Putative phosphate permease HP_1491 from Helicobacter pylori (strain ATCC 700392 / 26695) (Campylobacter pylori).